A 126-amino-acid chain; its full sequence is Fluoride-specific ion channel FluC (126 aa).

3 helical membrane-spanning segments follow: residues 33-53 (LPLN…VFIV), 64-84 (YSLF…SFAL), and 96-116 (GALA…LIGG). Na(+) contacts are provided by glycine 74 and threonine 77.

The protein belongs to the fluoride channel Fluc/FEX (TC 1.A.43) family.

The protein resides in the cell membrane. The enzyme catalyses fluoride(in) = fluoride(out). With respect to regulation, na(+) is not transported, but it plays an essential structural role and its presence is essential for fluoride channel function. Functionally, fluoride-specific ion channel. Important for reducing fluoride concentration in the cell, thus reducing its toxicity. This Nitrosopumilus maritimus (strain SCM1) protein is Fluoride-specific ion channel FluC.